The chain runs to 1755 residues: Transposon Ty1-JR2 Gag-Pol polyprotein (1755 aa).

Residues Met1–Ser16 show a composition bias toward low complexity. Disordered stretches follow at residues Met1–Gln93, Pro126–Pro173, and Gly352–Thr421. Polar residues-rich tracts occupy residues Thr48–Ser60, Ser71–Gln93, and Gln127–Phe152. Residues Thr153 to Thr165 show a composition bias toward low complexity. The RNA-binding stretch occupies residues Asn299–His401. Over residues Asn402–Ser418 the composition is skewed to low complexity. Ser416 is subject to Phosphoserine. Asp461 acts as the For protease activity; shared with dimeric partner in catalysis. Residues Asn583 to Cys640 are integrase-type zinc finger-like. Residues Asn660–Pro835 form the Integrase catalytic domain. Mg(2+) is bound by residues Asp671 and Asp736. 3 disordered regions span residues Ser956–Lys1087, Arg1092–Pro1111, and Asp1130–Glu1186. Positions Ser960–Thr969 are enriched in low complexity. Residues Ser1005–Thr1015 show a composition bias toward polar residues. Basic and acidic residues predominate over residues Glu1038–Ser1053. Polar residues-rich tracts occupy residues Tyr1054–Asp1082 and Pro1101–Pro1111. A Bipartite nuclear localization signal motif is present at residues Lys1178–Arg1212. The 139-residue stretch at Asn1338–Gln1476 folds into the Reverse transcriptase Ty1/copia-type domain. Residues Asp1346, Asp1427, Asp1428, Asp1610, Glu1652, and Asp1685 each coordinate Mg(2+). The region spanning Asp1610 to Lys1752 is the RNase H Ty1/copia-type domain.

The capsid protein forms a homotrimer, from which the VLPs are assembled. The protease is a homodimer, whose active site consists of two apposed aspartic acid residues. Post-translationally, initially, virus-like particles (VLPs) are composed of the structural unprocessed proteins Gag and Gag-Pol, and also contain the host initiator methionine tRNA (tRNA(i)-Met) which serves as a primer for minus-strand DNA synthesis, and a dimer of genomic Ty RNA. Processing of the polyproteins occurs within the particle and proceeds by an ordered pathway, called maturation. First, the protease (PR) is released by autocatalytic cleavage of the Gag-Pol polyprotein yielding capsid protein p45 and a Pol-p154 precursor protein. This cleavage is a prerequisite for subsequent processing of Pol-p154 at the remaining sites to release the mature structural and catalytic proteins. Maturation takes place prior to the RT reaction and is required to produce transposition-competent VLPs.

The protein localises to the cytoplasm. It localises to the nucleus. The enzyme catalyses DNA(n) + a 2'-deoxyribonucleoside 5'-triphosphate = DNA(n+1) + diphosphate. It catalyses the reaction Endonucleolytic cleavage to 5'-phosphomonoester.. Its function is as follows. Capsid protein (CA) is the structural component of the virus-like particle (VLP), forming the shell that encapsulates the retrotransposons dimeric RNA genome. The particles are assembled from trimer-clustered units and there are holes in the capsid shells that allow for the diffusion of macromolecules. CA also has nucleocapsid-like chaperone activity, promoting primer tRNA(i)-Met annealing to the multipartite primer-binding site (PBS), dimerization of Ty1 RNA and initiation of reverse transcription. The aspartyl protease (PR) mediates the proteolytic cleavages of the Gag and Gag-Pol polyproteins after assembly of the VLP. Functionally, reverse transcriptase/ribonuclease H (RT) is a multifunctional enzyme that catalyzes the conversion of the retro-elements RNA genome into dsDNA within the VLP. The enzyme displays a DNA polymerase activity that can copy either DNA or RNA templates, and a ribonuclease H (RNase H) activity that cleaves the RNA strand of RNA-DNA heteroduplexes during plus-strand synthesis and hydrolyzes RNA primers. The conversion leads to a linear dsDNA copy of the retrotransposon that includes long terminal repeats (LTRs) at both ends. In terms of biological role, integrase (IN) targets the VLP to the nucleus, where a subparticle preintegration complex (PIC) containing at least integrase and the newly synthesized dsDNA copy of the retrotransposon must transit the nuclear membrane. Once in the nucleus, integrase performs the integration of the dsDNA into the host genome. This is Transposon Ty1-JR2 Gag-Pol polyprotein (TY1B-JR2) from Saccharomyces cerevisiae (strain ATCC 204508 / S288c) (Baker's yeast).